We begin with the raw amino-acid sequence, 682 residues long: Histone deacetylase 18 (682 aa).

The interval 59 to 382 is histone deacetylase; that stretch reads KVGLVYDETM…SLACVQVLLE (324 aa). His191 serves as the catalytic Proton donor/acceptor. Residues Asp231, His233, and Asp324 each contribute to the Zn(2+) site. Residues 430–608 adopt a coiled-coil conformation; sequence SAERNSADAL…DKELQEDRSR (179 aa).

Belongs to the histone deacetylase family. HD type 2 subfamily. Requires Zn(2+) as cofactor. As to expression, expressed in roots, stems, young rosette leaves, flowers and siliques.

It is found in the nucleus. Its subcellular location is the cytoplasm. It catalyses the reaction N(6)-acetyl-L-lysyl-[histone] + H2O = L-lysyl-[histone] + acetate. Its function is as follows. Responsible for the deacetylation of lysine residues on the N-terminal part of the core histones (H2A, H2B, H3 and H4). Histone deacetylation gives a tag for epigenetic repression and plays an important role in transcriptional regulation, cell cycle progression and developmental events. Histone deacetylases act via the formation of large multiprotein complexes. Required for appropriate cellular patterning in the root epidermis. Involved in the differentiation of hair and non-hair cells in the root epidermis. Is not directly involved in the regulation of the expression of pattern genes. Regulates the transcription of certain kinase genes, which are components of a positional information relay system, by changing their histone acetylation status. The chain is Histone deacetylase 18 from Arabidopsis thaliana (Mouse-ear cress).